Here is a 148-residue protein sequence, read N- to C-terminus: Ribonuclease H (148 aa).

The RNase H type-1 domain occupies 3–144 (AEETVEIFTD…ADALANRGIE (142 aa)). Mg(2+)-binding residues include aspartate 12, glutamate 50, aspartate 72, and aspartate 136. The disordered stretch occupies residues 129-148 (HPENERADALANRGIEELKG).

The protein belongs to the RNase H family. In terms of assembly, monomer. Mg(2+) serves as cofactor.

The protein localises to the cytoplasm. It carries out the reaction Endonucleolytic cleavage to 5'-phosphomonoester.. Its function is as follows. Endonuclease that specifically degrades the RNA of RNA-DNA hybrids. The protein is Ribonuclease H of Dechloromonas aromatica (strain RCB).